The following is a 1191-amino-acid chain: Structural maintenance of chromosomes protein 3 (1191 aa).

32 to 39 (GRNGSGKS) is an ATP binding site. N6-acetyllysine is present on residues lysine 105, lysine 106, and lysine 140. Coiled-coil stretches lie at residues 173-357 (EESI…VKEK) and 389-504 (EERD…TGKA). Residues 242–268 (LSAKRETSGEKSRQLRDAQQDARDKME) form a disordered region. In terms of domain architecture, SMC hinge spans 530–642 (NGYHGIVMNN…CRSMEVSTQL (113 aa)). Positions 668 to 1022 (YYDTRKSRLE…SIMELMNVLE (355 aa)) form a coiled coil. Position 783 is a phosphothreonine (threonine 783). Residues serine 787, serine 886, serine 1013, serine 1065, serine 1067, serine 1074, and serine 1083 each carry the phosphoserine modification. A disordered region spans residues 1059–1090 (KGDVEGSQSQDEGEGSGESERGSGSQSSVPSV).

This sequence belongs to the SMC family. SMC3 subfamily. As to quaternary structure, forms a heterodimer with SMC1A or SMC1B in cohesin complexes. Cohesin complexes are composed of the SMC1 (SMC1A or meiosis-specific SMC1B) and SMC3 heterodimer attached via their SMC hinge domain, RAD21 which link them, and one STAG protein (STAG1, STAG2 or STAG3), which interacts with RAD21. Also found in meiosis-specific cohesin complexes. Found in a complex with SMC1A, CDCA5 and RAD21, PDS5A/SCC-112 and PDS5B/APRIN. Interacts with MXI1, MXD3 and MXD4. Interacts with NUMA1, and forms a ternary complex with KIF3B and KIFAP3, suggesting a function in tethering the chromosomes to the spindle pole and a function in chromosome movement. Interacts with PDS5A and WAPL; regulated by SMC3 acetylation. Interacts (via SMC hinge domain) with KIAA1328 (via N- and C-terminal domains). Interacts with DDX11, RPGR and STAG3. The cohesin complex interacts with the cohesin loading complex subunits NIPBL/Scc2 (via HEAT repeats) and MAU2/Scc4. NIPBL directly contacts all members of the complex, RAD21, SMC1A/B, SMC3 and STAG1. Interacts with SYCP2. Interacts with the NuRD complex component HDAC2; the interaction is direct. Post-translationally, phosphorylated at Ser-1083 in a SPO11-dependent manner. Acetylation at Lys-105 and Lys-106 by ESCO1 is important for genome stability and S phase sister chromatid cohesion. Regulated by DSCC1, it is required for processive DNA synthesis, coupling sister chromatid cohesion establishment during S phase to DNA replication. Deacetylation by HDAC8, regulates release of the cohesin complex from chromatin. In terms of processing, ubiquitinated by the DCX(DCAF15) complex, leading to its degradation. Ubiquitous.

It is found in the nucleus. The protein resides in the chromosome. It localises to the centromere. Functionally, central component of cohesin, a complex required for chromosome cohesion during the cell cycle. The cohesin complex may form a large proteinaceous ring within which sister chromatids can be trapped. At anaphase, the complex is cleaved and dissociates from chromatin, allowing sister chromatids to segregate. Cohesion is coupled to DNA replication and is involved in DNA repair. The cohesin complex also plays an important role in spindle pole assembly during mitosis and in chromosomes movement. The chain is Structural maintenance of chromosomes protein 3 (Smc3) from Rattus norvegicus (Rat).